The primary structure comprises 332 residues: Anthranilate phosphoribosyltransferase (332 aa).

5-phospho-alpha-D-ribose 1-diphosphate-binding positions include G79, 82-83 (GD), T87, 89-92 (NIST), 107-115 (KHGNYGATS), and A119. G79 provides a ligand contact to anthranilate. S91 contributes to the Mg(2+) binding site. Residue N110 coordinates anthranilate. R165 contributes to the anthranilate binding site. Residues D223 and E224 each contribute to the Mg(2+) site.

It belongs to the anthranilate phosphoribosyltransferase family. In terms of assembly, homodimer. The cofactor is Mg(2+).

It catalyses the reaction N-(5-phospho-beta-D-ribosyl)anthranilate + diphosphate = 5-phospho-alpha-D-ribose 1-diphosphate + anthranilate. The protein operates within amino-acid biosynthesis; L-tryptophan biosynthesis; L-tryptophan from chorismate: step 2/5. In terms of biological role, catalyzes the transfer of the phosphoribosyl group of 5-phosphorylribose-1-pyrophosphate (PRPP) to anthranilate to yield N-(5'-phosphoribosyl)-anthranilate (PRA). This Bacteroides thetaiotaomicron (strain ATCC 29148 / DSM 2079 / JCM 5827 / CCUG 10774 / NCTC 10582 / VPI-5482 / E50) protein is Anthranilate phosphoribosyltransferase.